Here is a 569-residue protein sequence, read N- to C-terminus: Adenine deaminase 1 (569 aa).

It belongs to the metallo-dependent hydrolases superfamily. Adenine deaminase family. Mn(2+) is required as a cofactor.

The catalysed reaction is adenine + H2O + H(+) = hypoxanthine + NH4(+). The polypeptide is Adenine deaminase 1 (Rhizobium johnstonii (strain DSM 114642 / LMG 32736 / 3841) (Rhizobium leguminosarum bv. viciae)).